The following is a 250-amino-acid chain: MADS-box transcription factor 47 (250 aa).

Residues 1-10 (MAGGGGGGGR) are compositionally biased toward gly residues. Disordered regions lie at residues 1–20 (MAGGGGGGGRGEGEGRAATG) and 196–250 (SRME…FSSK). Over residues 11-20 (GEGEGRAATG) the composition is skewed to basic and acidic residues. One can recognise an MADS-box domain in the interval 20–80 (GKRERIAIRR…GKLFQFASTS (61 aa)). The 93-residue stretch at 106–198 (QGEDSSTCAR…QLQVSRMSRM (93 aa)) folds into the K-box domain. A compositionally biased stretch (polar residues) spans 214 to 224 (GQSSESVTNAS).

As to quaternary structure, may interact with MADS18. Expressed in roots, shoots and developing panicles. Expressed in mature stems and leaves, flowering panicles, developing seeds, and mature seeds.

It is found in the nucleus. Its function is as follows. Transcription factor that modulates expressions of multiple genes involved in cell signaling and gene transcription. Plays a negative regulatory role in brassinosteroid signaling. The chain is MADS-box transcription factor 47 from Oryza sativa subsp. japonica (Rice).